The sequence spans 388 residues: MFKRVHLIVLDSVGIGEAPDAEKFGDVGSDTLGHIAKEAGLTIPHLEKLGLGTIAPLTGVKAVADHDGYATKLEEISVGKDTMTGHWEIMGLNIKKPFRVFPNGFPEELLKQIEDFSGRKVVCNKPYSGTAVIDDYGEHQMKTGDLIVYTSADPVLQIAAHEDIIPLEELYKICQYVRDITKDEPYMIGRIIARPYVGEPGNFTRTSNRHDYALDPFGHTVLDSLKENGNDVIAVGKINDIFNGQGITEAIRTKSNMDGVDQLLTVMNKEFTGLSFTNLVDFDALYGHRRDVKGYAKAIEDFDGRLPEIMAAMAEDDLLLITADHGNDPTFPGTDHTREYVPLLAYSKKMTKQGSLPQGFYSDISATIAENFEVPATENGQSFLNQLQ.

The Mn(2+) site is built by Asp-11, Asp-283, His-288, Asp-324, His-325, and His-336.

The protein belongs to the phosphopentomutase family. Requires Mn(2+) as cofactor.

Its subcellular location is the cytoplasm. The enzyme catalyses 2-deoxy-alpha-D-ribose 1-phosphate = 2-deoxy-D-ribose 5-phosphate. The catalysed reaction is alpha-D-ribose 1-phosphate = D-ribose 5-phosphate. It functions in the pathway carbohydrate degradation; 2-deoxy-D-ribose 1-phosphate degradation; D-glyceraldehyde 3-phosphate and acetaldehyde from 2-deoxy-alpha-D-ribose 1-phosphate: step 1/2. In terms of biological role, isomerase that catalyzes the conversion of deoxy-ribose 1-phosphate (dRib-1-P) and ribose 1-phosphate (Rib-1-P) to deoxy-ribose 5-phosphate (dRib-5-P) and ribose 5-phosphate (Rib-5-P), respectively. The sequence is that of Phosphopentomutase from Enterococcus faecalis (strain ATCC 700802 / V583).